A 293-amino-acid chain; its full sequence is Protease HtpX homolog (293 aa).

A run of 2 helical transmembrane segments spans residues 7–26 (ASLL…ALLG) and 30–49 (GMVM…WYYS). His131 lines the Zn(2+) pocket. The active site involves Glu132. Residue His135 participates in Zn(2+) binding. 2 helical membrane passes run 148-168 (ATLA…FWFF) and 180-200 (IGAL…QLGI). Position 205 (Glu205) interacts with Zn(2+).

This sequence belongs to the peptidase M48B family. The cofactor is Zn(2+).

The protein resides in the cell inner membrane. This Acaryochloris marina (strain MBIC 11017) protein is Protease HtpX homolog.